Consider the following 114-residue polypeptide: Helper of Tim protein 13 (114 aa).

The CHY-type; degenerate zinc finger occupies 10 to 90 (LVDKESRCEH…DSLQCPNCRS (81 aa)). Zn(2+) is bound by residues C17, H19, C40, C43, C67, C70, C85, and C88.

As to quaternary structure, interacts with the small Tim proteins.

It is found in the mitochondrion intermembrane space. Its subcellular location is the mitochondrion membrane. Its function is as follows. Required for the assembly or recycling of the small Tim proteins in the mitochondrial intermembrane, thereby participating in the import and insertion of multi-pass transmembrane proteins into the mitochondrial inner membrane. This is Helper of Tim protein 13 (HOT13) from Kluyveromyces lactis (strain ATCC 8585 / CBS 2359 / DSM 70799 / NBRC 1267 / NRRL Y-1140 / WM37) (Yeast).